A 241-amino-acid chain; its full sequence is Nopaline transport system permease protein NocM (241 aa).

The region spanning 17-215 (VPTTLTLAFI…FITFVVSRLV (199 aa)) is the ABC transmembrane type-1 domain. The next 5 helical transmembrane spans lie at 21–41 (LTLAFISLLIGFVVSVPVALM), 52–72 (LAYGYVYIIRSTPLLVQMFLI), 95–115 (PWFCAILALALNTAAYTSEII), 161–181 (VMLIIKSTSLASTITIVEVTG), and 191–211 (YSPVEVFIVAGAIYLFITFVV).

Belongs to the binding-protein-dependent transport system permease family. HisMQ subfamily.

The protein resides in the cell inner membrane. In terms of biological role, component of the nopaline active transport system probably consisting of four subunits: Q, M, P and T. This system is also capable of transporting octopine provided that catabolic functions are induced with nopaline. This Agrobacterium fabrum (strain C58 / ATCC 33970) (Agrobacterium tumefaciens (strain C58)) protein is Nopaline transport system permease protein NocM (nocM).